The sequence spans 93 residues: N-myc protein (93 aa).

Efficient DNA binding requires dimerization with another bHLH protein. Binds DNA as a heterodimer with MAX. In terms of tissue distribution, barely detectable in most tissues assayed.

The protein resides in the nucleus. Functionally, may function as a transcription factor. This Danio rerio (Zebrafish) protein is N-myc protein (mycn).